The following is a 232-amino-acid chain: Probable phospholipid hydroperoxide glutathione peroxidase 6, mitochondrial (232 aa).

The N-terminal 54 residues, 1-54 (MLRSSIRLLYIRRTSPLLRSLSSSSSSSSSKRFDSAKPLFNSHRIISLPISTTG), are a transit peptide targeting the mitochondrion. The active site involves C105.

The protein belongs to the glutathione peroxidase family. In terms of tissue distribution, expressed at a low but detectable level in leaves, stems, and flowers, but at a higher level in siliques and even higher in roots. Predominantly expressed in seeds.

Its subcellular location is the mitochondrion. The enzyme catalyses a hydroperoxy polyunsaturated fatty acid + 2 glutathione = a hydroxy polyunsaturated fatty acid + glutathione disulfide + H2O. Functionally, protects cells and enzymes from oxidative damage, by catalyzing the reduction of hydrogen peroxide, lipid peroxides and organic hydroperoxide, by glutathione. The chain is Probable phospholipid hydroperoxide glutathione peroxidase 6, mitochondrial (GPX6) from Arabidopsis thaliana (Mouse-ear cress).